The sequence spans 593 residues: A-type ATP synthase subunit A (593 aa).

236–243 contributes to the ATP binding site; it reads GPFGSGKT.

This sequence belongs to the ATPase alpha/beta chains family. As to quaternary structure, has multiple subunits with at least A(3), B(3), C, D, E, F, H, I and proteolipid K(x).

The protein resides in the cell membrane. It catalyses the reaction ATP + H2O + 4 H(+)(in) = ADP + phosphate + 5 H(+)(out). In terms of biological role, component of the A-type ATP synthase that produces ATP from ADP in the presence of a proton gradient across the membrane. The A chain is the catalytic subunit. This chain is A-type ATP synthase subunit A, found in Pyrobaculum islandicum (strain DSM 4184 / JCM 9189 / GEO3).